Reading from the N-terminus, the 441-residue chain is 23S rRNA (uracil(1939)-C(5))-methyltransferase RlmD (441 aa).

Positions 1-56 (MSIDSLDMEARGVGRLLNEDGTPGKVIFVEGALPGETVSYRSFRRKPSYEQAHLVE) constitute a TRAM domain. Residues C69, C75, C78, and C157 each coordinate [4Fe-4S] cluster. The S-adenosyl-L-methionine site is built by Q265, F294, N299, E315, N343, and D364. Catalysis depends on C397, which acts as the Nucleophile.

The protein belongs to the class I-like SAM-binding methyltransferase superfamily. RNA M5U methyltransferase family. RlmD subfamily.

It carries out the reaction uridine(1939) in 23S rRNA + S-adenosyl-L-methionine = 5-methyluridine(1939) in 23S rRNA + S-adenosyl-L-homocysteine + H(+). Its function is as follows. Catalyzes the formation of 5-methyl-uridine at position 1939 (m5U1939) in 23S rRNA. The sequence is that of 23S rRNA (uracil(1939)-C(5))-methyltransferase RlmD from Cupriavidus necator (strain ATCC 17699 / DSM 428 / KCTC 22496 / NCIMB 10442 / H16 / Stanier 337) (Ralstonia eutropha).